Reading from the N-terminus, the 445-residue chain is ATP synthase subunit b-delta (445 aa).

An ATP synthase subunit b region spans residues 1–168 (MSIFIGQLIG…PSSVVIDTAA (168 aa)). A helical transmembrane segment spans residues 3-23 (IFIGQLIGFAVIAFIIVKWVV). The interval 169–445 (TSRLRAASRQ…LAAAQTGLPD (277 aa)) is ATP synthase subunit delta.

In the N-terminal section; belongs to the ATPase B chain family. This sequence in the C-terminal section; belongs to the ATPase delta chain family. In terms of assembly, F-type ATPases have 2 components, F(1) - the catalytic core - and F(0) - the membrane proton channel. F(1) has five subunits: alpha(3), beta(3), gamma(1), delta(1), epsilon(1). F(0) has three main subunits: a(1), b(2) and c(10-14). The alpha and beta chains form an alternating ring which encloses part of the gamma chain. F(1) is attached to F(0) by a central stalk formed by the gamma and epsilon chains, while a peripheral stalk is formed by the delta and b chains.

Its subcellular location is the cell membrane. Its function is as follows. F(1)F(0) ATP synthase produces ATP from ADP in the presence of a proton or sodium gradient. F-type ATPases consist of two structural domains, F(1) containing the extramembraneous catalytic core and F(0) containing the membrane proton channel, linked together by a central stalk and a peripheral stalk. During catalysis, ATP synthesis in the catalytic domain of F(1) is coupled via a rotary mechanism of the central stalk subunits to proton translocation. In terms of biological role, this fusion protein includes a component of the F(0) channel (subunit b) and of the F(1) subunit (subunit delta). Two copies of subunit b and one of delta together form the peripheral 'stator' stalk which links F(1) to F(0). This Mycolicibacterium smegmatis (strain ATCC 700084 / mc(2)155) (Mycobacterium smegmatis) protein is ATP synthase subunit b-delta (atpFH).